Here is a 177-residue protein sequence, read N- to C-terminus: MLDAFSRVVVNSDTKAAYVGGSDLQALKKFIADGNKRLDSVNAIVSNASCVVSDAVSGMICENPGLITPGGNCYTNRRMAACLRDGEIIIRYVSYALLSGDPSVLEDRCLNGLKETYIALGVPTNSNARAVDIMKASVVALINNTATLRKMPTPSGDCSALAAEAGSYFDRVNSALS.

Residues C50 and C61 each contribute to the phycourobilin site. N72 carries the N4-methylasparagine modification. Residues C82 and C158 each coordinate (2R,3E)-phycoerythrobilin.

It belongs to the phycobiliprotein family. In terms of assembly, heteromer of 6 alpha, 6 beta and one gamma chain. Contains two covalently linked phycoerythrobilin chromophores and one covalently linked phycourobilin chromophore.

Its subcellular location is the plastid. The protein resides in the chloroplast thylakoid membrane. Functionally, light-harvesting photosynthetic bile pigment-protein from the phycobiliprotein complex. The protein is B-phycoerythrin beta chain (cpeB) of Rhodella violacea (Red alga).